The chain runs to 565 residues: NAD-dependent malic enzyme (565 aa).

Y103 acts as the Proton donor in catalysis. The active-site Proton acceptor is K177. A divalent metal cation is bound by residues E248, D249, and D272. Residues D272 and N419 each contribute to the NAD(+) site. A Phosphoserine modification is found at S445.

The protein belongs to the malic enzymes family. Requires Mg(2+) as cofactor. The cofactor is Mn(2+).

The catalysed reaction is (S)-malate + NAD(+) = pyruvate + CO2 + NADH. It catalyses the reaction oxaloacetate + H(+) = pyruvate + CO2. This Schizosaccharomyces pombe (strain 972 / ATCC 24843) (Fission yeast) protein is NAD-dependent malic enzyme (mae2).